We begin with the raw amino-acid sequence, 343 residues long: Putative KilA-N domain-containing protein R904 (343 aa).

In terms of domain architecture, KilA-N spans 51–157 (EFSWGNYLNL…IKASVIINDY (107 aa)). A coiled-coil region spans residues 159-279 (AKQMFKEHEK…NAVKEYKELY (121 aa)).

This Acanthamoeba polyphaga mimivirus (APMV) protein is Putative KilA-N domain-containing protein R904.